We begin with the raw amino-acid sequence, 315 residues long: Archaeosortase A (315 aa).

The next 7 membrane-spanning stretches (helical) occupy residues 12-32, 47-67, 74-94, 173-193, 204-224, 227-247, and 260-280; these read VIPY…AGVA, AGAW…FAFV, TVLI…VFAG, VVFE…IAAV, IALS…FIAL, GYQW…FGLT, and VLAQ…IARW. The active-site Acyl-thioester intermediate is C177. The Proton donor role is filled by R218.

This sequence belongs to the exosortase/archaeosortase family. Archaeosortase A subfamily.

The protein resides in the cell membrane. Functionally, transpeptidase that recognizes and modifies its substrate by proteolytic cleavage of a sorting signal. Following cleavage, a covalent intermediate is formed via a thioester bond between the archaeosortase and its substrate, which is then transferred and covalently attached to the cell membrane. The protein is Archaeosortase A of Natronomonas pharaonis (strain ATCC 35678 / DSM 2160 / CIP 103997 / JCM 8858 / NBRC 14720 / NCIMB 2260 / Gabara) (Halobacterium pharaonis).